The following is a 30-amino-acid chain: Brevinin-2Rj (30 aa).

Cys-24 and Cys-30 are joined by a disulfide.

As to expression, expressed by the skin glands.

It is found in the secreted. Its function is as follows. Antimicrobial peptide. The polypeptide is Brevinin-2Rj (Pelophylax ridibundus (Marsh frog)).